The sequence spans 115 residues: UPF0102 protein NGO_1987 (115 aa).

It belongs to the UPF0102 family.

This Neisseria gonorrhoeae (strain ATCC 700825 / FA 1090) protein is UPF0102 protein NGO_1987.